We begin with the raw amino-acid sequence, 470 residues long: Uronate isomerase (470 aa).

It belongs to the metallo-dependent hydrolases superfamily. Uronate isomerase family.

It carries out the reaction D-glucuronate = D-fructuronate. The enzyme catalyses aldehydo-D-galacturonate = keto-D-tagaturonate. It participates in carbohydrate metabolism; pentose and glucuronate interconversion. This Klebsiella pneumoniae (strain 342) protein is Uronate isomerase.